A 964-amino-acid polypeptide reads, in one-letter code: Reticulon-3 (964 aa).

Positions 1-24 (MAESSAATQSPSVSSSSSGAEPSA) are enriched in low complexity. Disordered regions lie at residues 1–32 (MAESSAATQSPSVSSSSSGAEPSALGGGGGSP), 68–109 (AGLS…SETL), and 179–200 (WVVKDQEPKNPNKVPDGEDRSA). A2 carries the post-translational modification N-acetylalanine. At 2 to 795 (AESSAATQSP…KKTGFVFGTT (794 aa)) the chain is on the cytoplasmic side. Residue S31 is modified to Phosphoserine. Low complexity predominate over residues 80 to 91 (SKSMTSSFLSSS). A phosphoserine mark is found at S217, S225, S230, S233, S270, S303, and S429. The disordered stretch occupies residues 479–536 (ITEKPDSLPSAAAKTSEREIKETPSRETVRSEMCENSEQPQAQPETPTQKSLEGEVAS). A compositionally biased stretch (basic and acidic residues) spans 493-511 (TSEREIKETPSRETVRSEM). The segment covering 516 to 527 (EQPQAQPETPTQ) has biased composition (low complexity). A Phosphoserine modification is found at S529. T593 is subject to Phosphothreonine. Phosphoserine is present on residues S596, S597, and S673. Disordered regions lie at residues 645 to 674 (ELSGSETKNIKSKYSEDSRETTGGAPTMSP) and 697 to 723 (VQDEGISSGGKLKQTFAPQSGPQSSSD). Polar residues predominate over residues 712–723 (FAPQSGPQSSSD). The region spanning 776 to 964 (VHDLIFWRDV…LPGIAKKKAE (189 aa)) is the Reticulon domain. The segment at residues 796–819 (LIMLLSLAAFSVISVVSYLILALL) is an intramembrane region (helical). Over 820–876 (SVTISFRVYKSVIQAVQKSEEGHPFKAYLDVDITLSSEAFHNYMNAAMVHVNKALKL) the chain is Cytoplasmic. An intramembrane region (helical) is located at residues 877-899 (IIRLFLVEDLVDSLKLAVFMWLM). The Cytoplasmic segment spans residues 900–903 (TYVG). The helical intramembrane region spans 904-926 (AVFNGITLLILAELLVFSVPIVY). The tract at residues 919-964 (VFSVPIVYEKYKTQIDHYVGIARDQTKSIVEKIQAKLPGIAKKKAE) is interaction with FADD. Residues 927–964 (EKYKTQIDHYVGIARDQTKSIVEKIQAKLPGIAKKKAE) lie on the Cytoplasmic side of the membrane. The tract at residues 932 to 934 (QID) is interaction with BACE1.

In terms of assembly, homodimer. Interacts with RTN4. Isoform 3 interacts with BACE1, BACE2, BCL2 and FADD. Interacts with ATL1 and ATL2. Isoform 3 interacts with TMEM33. Interacts with ZFYVE27 and with KIF5A in a ZFYVE27-dependent manner. Interacts with RIGI. Interacts with TRIM25. As to expression, isoform 1, isoform 3, isoform 4 and isoform 5 are expressed in spinal cord. Isoform 1 is present in brain, where it is expressed in the neurons of cerebral cortex, hippocampus, hypothalamus and cerebellum (at protein level).

The protein resides in the endoplasmic reticulum membrane. The protein localises to the golgi apparatus membrane. Functionally, may be involved in membrane trafficking in the early secretory pathway. Inhibits BACE1 activity and amyloid precursor protein processing. May induce caspase-8 cascade and apoptosis. May favor BCL2 translocation to the mitochondria upon endoplasmic reticulum stress. Induces the formation of endoplasmic reticulum tubules. Also acts as an inflammation-resolving regulator by interacting with both TRIM25 and RIGI, subsequently impairing RIGI 'Lys-63'-linked polyubiquitination leading to IRF3 and NF-kappa-B inhibition. The polypeptide is Reticulon-3 (Rtn3) (Mus musculus (Mouse)).